We begin with the raw amino-acid sequence, 150 residues long: 3-hydroxyacyl-[acyl-carrier-protein] dehydratase FabZ (150 aa).

Residue histidine 54 is part of the active site.

This sequence belongs to the thioester dehydratase family. FabZ subfamily.

The protein resides in the cytoplasm. The enzyme catalyses a (3R)-hydroxyacyl-[ACP] = a (2E)-enoyl-[ACP] + H2O. In terms of biological role, involved in unsaturated fatty acids biosynthesis. Catalyzes the dehydration of short chain beta-hydroxyacyl-ACPs and long chain saturated and unsaturated beta-hydroxyacyl-ACPs. The sequence is that of 3-hydroxyacyl-[acyl-carrier-protein] dehydratase FabZ from Colwellia psychrerythraea (strain 34H / ATCC BAA-681) (Vibrio psychroerythus).